Consider the following 412-residue polypeptide: Class E basic helix-loop-helix protein 40 (412 aa).

An essential for interaction with BMAL1, E-box binding and repressor activity against the CLOCK-BMAL1 heterodimer region spans residues 1–139 (MERIPSAQPP…LSGRNVETGQ (139 aa)). One can recognise a bHLH domain in the interval 52 to 107 (TYKLPHRLIEKKRRDRINECIAQLKDLLPEHLKLTTLGHLEKAVVLELTLKHVKAL). The necessary for interaction with RXRA and repressor activity against RXRA stretch occupies residues 75 to 79 (LKDLL). Residues 142–175 (FCSGFQTCAREVLQYLAKHENTRDLKSSQLVTHL) enclose the Orange domain. Lys-159 participates in a covalent cross-link: Glycyl lysine isopeptide (Lys-Gly) (interchain with G-Cter in SUMO1, SUMO2 and SUMO3). Lys-167 participates in a covalent cross-link: Glycyl lysine isopeptide (Lys-Gly) (interchain with G-Cter in SUMO2). Disordered stretches follow at residues 183-259 (LQGG…SEQL) and 275-309 (IGAIKQESEEPPTKKNRMQLSDDEGHFTSSDLISS). At Ser-235 the chain carries Phosphoserine. Residues 248–259 (ESEKGDLRSEQL) are compositionally biased toward basic and acidic residues. A Glycyl lysine isopeptide (Lys-Gly) (interchain with G-Cter in SUMO1); alternate cross-link involves residue Lys-279. Residue Lys-279 forms a Glycyl lysine isopeptide (Lys-Gly) (interchain with G-Cter in SUMO1, SUMO2 and SUMO3); alternate linkage. Lys-279 participates in a covalent cross-link: Glycyl lysine isopeptide (Lys-Gly) (interchain with G-Cter in SUMO2); alternate. Lys-288 is covalently cross-linked (Glycyl lysine isopeptide (Lys-Gly) (interchain with G-Cter in SUMO2)). Ser-383 is subject to Phosphoserine.

Homodimer. Heterodimer with BHLHE41/DEC2. Interacts with TCF3/E47. Interacts with ubiquitin-conjugating enzyme UBE2I/UBC9. Interacts with HDAC1, SUMO1, RXRA and BMAL1. Ubiquitinated; which may lead to proteasomal degradation. Post-translationally, sumoylation inhibits its ubiquitination and promotes its negative regulation of the CLOCK-BMAL1 heterodimer transcriptional activator activity.

Its subcellular location is the cytoplasm. It is found in the nucleus. Its function is as follows. Transcriptional repressor involved in the regulation of the circadian rhythm by negatively regulating the activity of the clock genes and clock-controlled genes. Acts as the negative limb of a novel autoregulatory feedback loop (DEC loop) which differs from the one formed by the PER and CRY transcriptional repressors (PER/CRY loop). Both these loops are interlocked as it represses the expression of PER1/2 and in turn is repressed by PER1/2 and CRY1/2. Represses the activity of the circadian transcriptional activator: CLOCK-BMAL1|BMAL2 heterodimer by competing for the binding to E-box elements (5'-CACGTG-3') found within the promoters of its target genes. Negatively regulates its own expression and the expression of DBP and BHLHE41/DEC2. Acts as a corepressor of RXR and the RXR-LXR heterodimers and represses the ligand-induced RXRA and NR1H3/LXRA transactivation activity. May be involved in the regulation of chondrocyte differentiation via the cAMP pathway. Represses the transcription of NR0B2 and attentuates the transactivation of NR0B2 by the CLOCK-BMAL1 complex. Drives the circadian rhythm of blood pressure through transcriptional repression of ATP1B1 in the cardiovascular system. The chain is Class E basic helix-loop-helix protein 40 (BHLHE40) from Pongo abelii (Sumatran orangutan).